The chain runs to 806 residues: NADH:(hydroxy)cinnamate reductase subunit CrdB (806 aa).

Ser257 is modified (FMN phosphoryl serine). Residues Ala310, Glu329, Asn337, Thr338, Gly342, Gly343, and Asp576 each contribute to the FAD site. Catalysis depends on Arg635, which acts as the Proton donor. The FAD site is built by His742, Glu771, Ala786, and Leu787.

It belongs to the FAD-dependent oxidoreductase 2 family. FRD/SDH subfamily. In terms of assembly, NADH:(hydroxy)cinnamate reductase Crd is a heterodimer composed of CrdA and CrdB subunits, encoded by adjacent genes. Requires FAD as cofactor. The cofactor is FMN. In terms of processing, is flavinylated on Ser-257 by ApbE, encoded in a neighboring gene. Covalent attachment of FMN is essential for catalytic activity.

The enzyme catalyses 3-phenylpropanoate + NAD(+) = (E)-cinnamate + NADH + H(+). The catalysed reaction is 3-(3,4-dihydroxyphenyl)propanoate + NAD(+) = (E)-caffeate + NADH + H(+). It catalyses the reaction phloretate + NAD(+) = (E)-4-coumarate + NADH + H(+). It carries out the reaction dihydroferulate + NAD(+) = (E)-ferulate + NADH + H(+). Its activity is regulated as follows. Is inactivated by molecular oxygen, allowing regulation of Crd activity by medium oxygen level. Its function is as follows. Component of the NADH:(hydroxy)cinnamate reductase Crd that catalyzes the reduction of the double bond in cinnamate, p-coumarate, caffeate, and ferulate under anaerobic conditions with NADH or methyl viologen as the electron donor. Is moderately active against acrylate and practically inactive against urocanate, fumarate, methacrylate and crotonate. CrdB is the catalytic subunit that binds substrates. Is likely involved in protecting V.ruber from (hydroxy)cinnamate poisoning. This Vibrio ruber (strain DSM 16370 / JCM 11486 / BCRC 17186 / CECT 7878 / LMG 23124 / VR1) protein is NADH:(hydroxy)cinnamate reductase subunit CrdB.